The sequence spans 243 residues: Probable 2-phosphosulfolactate phosphatase (243 aa).

This sequence belongs to the ComB family. The cofactor is Mg(2+).

It catalyses the reaction (2R)-O-phospho-3-sulfolactate + H2O = (2R)-3-sulfolactate + phosphate. This Synechococcus sp. (strain CC9605) protein is Probable 2-phosphosulfolactate phosphatase.